The sequence spans 228 residues: D-lyxose/D-mannose isomerase (228 aa).

Residues H103, H105, E110, and H171 each contribute to the Mn(2+) site.

This sequence belongs to the D-lyxose ketol-isomerase family. Homodimer. It depends on Mn(2+) as a cofactor.

It catalyses the reaction D-lyxose = D-xylulose. It carries out the reaction D-mannose = D-fructose. In terms of biological role, sugar isomerase that catalyzes the reversible isomerization of D-lyxose to D-xylulose, and D-mannose to D-fructose. Shows optimum activity using D-lyxose as substrate, but can also effectively catalyze the isomerization between D-fructose and D-mannose. Shows lower activity with L-gulose, D-talose and L-ribose. This chain is D-lyxose/D-mannose isomerase, found in Serratia proteamaculans.